Here is a 594-residue protein sequence, read N- to C-terminus: Protein TRANSPORT INHIBITOR RESPONSE 1 (594 aa).

In terms of domain architecture, F-box spans 3–50; it reads KRIALSFPEEVLEHVFSFIQLDKDRNSVSLVCKSWYEIERWCRRKVFI. Lys74 contributes to the 1D-myo-inositol hexakisphosphate binding site. An interaction with auxin-responsive proteins region spans residues 81–82; it reads DF. Residues 113–114 and Arg344 contribute to the 1D-myo-inositol hexakisphosphate site; that span reads KR. An interaction with auxin-responsive proteins region spans residues 347-352; that stretch reads PSEPFV. 401–403 contributes to the 1D-myo-inositol hexakisphosphate binding site; sequence RFR. Arg403 provides a ligand contact to (indol-3-yl)acetate. Residues 405 to 409 are interaction with auxin-responsive proteins; that stretch reads CIIEP. Arg436 contributes to the 1D-myo-inositol hexakisphosphate binding site. Residue 438 to 439 coordinates (indol-3-yl)acetate; that stretch reads SL. An interaction with auxin-responsive proteins region spans residues 464 to 465; sequence AF. 1D-myo-inositol hexakisphosphate-binding positions include 484 to 485 and Arg509; that span reads RK.

As to quaternary structure, interacts with auxin. Part of a SCF E3 ubiquitin ligase complex SCF(TIR1) composed of SKP1, CUL1, RBX1 and TIR1. SCF(TIR1) interacts with the COP9 signalosome (CSN) complex. Interacts with Aux/IAA proteins (IAA3, IAA7, IAA12 and IAA17) in an auxin-dependent manner. The interaction with IAA3, a negative regulator of auxin responses, is promoted by auxin, but repressed by juglon (5-hydroxy-1,4-naphthoquinone). Interactions with auxin-responsive proteins is inactivated by auxin antagonists. As to expression, expressed in roots, stems, leaves and flowers. In adult plants, mostly expressed in floral stigma, anther filaments, abscission zones and vascular tissues.

The protein localises to the nucleus. Its pathway is protein modification; protein ubiquitination. Auxin receptor that mediates Aux/IAA proteins proteasomal degradation and auxin-regulated transcription. The SCF(TIR1) E3 ubiquitin ligase complex is involved in auxin-mediated signaling pathway that regulate root and hypocotyl growth, lateral root formation, cell elongation, and gravitropism. Appears to allow pericycle cells to overcome G2 arrest prior to lateral root development. Plays a role in ethylene signaling in roots. Confers sensitivity to the virulent bacterial pathogen P.syringae. In Arabidopsis thaliana (Mouse-ear cress), this protein is Protein TRANSPORT INHIBITOR RESPONSE 1 (TIR1).